Consider the following 233-residue polypeptide: 7-cyano-7-deazaguanine synthase (233 aa).

7 to 17 serves as a coordination point for ATP; that stretch reads CSGGLDSVSLA. Cysteine 185, cysteine 193, cysteine 196, and cysteine 199 together coordinate Zn(2+).

It belongs to the QueC family. It depends on Zn(2+) as a cofactor.

It catalyses the reaction 7-carboxy-7-deazaguanine + NH4(+) + ATP = 7-cyano-7-deazaguanine + ADP + phosphate + H2O + H(+). The protein operates within purine metabolism; 7-cyano-7-deazaguanine biosynthesis. Catalyzes the ATP-dependent conversion of 7-carboxy-7-deazaguanine (CDG) to 7-cyano-7-deazaguanine (preQ(0)). The chain is 7-cyano-7-deazaguanine synthase from Ruegeria sp. (strain TM1040) (Silicibacter sp.).